The following is a 382-amino-acid chain: Polyadenylate-binding protein 5 (382 aa).

RRM domains lie at 18–96 (AALY…WSQP), 106–182 (GNIF…RFKF), 199–276 (TNVF…RAQK), and 302–378 (VPIY…LGQA).

The protein localises to the cytoplasm. Functionally, binds the poly(A) tail of mRNA. May be involved in cytoplasmic regulatory processes of mRNA metabolism. Can probably bind to cytoplasmic RNA sequences other than poly(A) in vivo. This is Polyadenylate-binding protein 5 (PABPC5) from Gorilla gorilla gorilla (Western lowland gorilla).